The sequence spans 657 residues: Glycogen debranching enzyme (657 aa).

Asp336 serves as the catalytic Nucleophile. Glu371 acts as the Proton donor in catalysis. The interval 460–479 (ANGEENRDGTNNNYSNNHGK) is disordered.

This sequence belongs to the glycosyl hydrolase 13 family.

The enzyme catalyses Hydrolysis of (1-&gt;6)-alpha-D-glucosidic linkages to branches with degrees of polymerization of three or four glucose residues in limit dextrin.. The protein operates within glycan degradation; glycogen degradation. Functionally, removes maltotriose and maltotetraose chains that are attached by 1,6-alpha-linkage to the limit dextrin main chain, generating a debranched limit dextrin. This chain is Glycogen debranching enzyme, found in Escherichia coli O127:H6 (strain E2348/69 / EPEC).